A 344-amino-acid chain; its full sequence is Sensor histidine kinase GraS (344 aa).

A run of 2 helical transmembrane segments spans residues 18 to 38 and 43 to 63; these read IFWI…DYDI and IGFI…FTFL. One can recognise a Histidine kinase domain in the interval 126-332; the sequence is EFVHDIKTPV…TFVLTFPKQN (207 aa). Phosphohistidine; by autocatalysis is present on H129.

In terms of processing, autophosphorylated.

Its subcellular location is the cell membrane. It catalyses the reaction ATP + protein L-histidine = ADP + protein N-phospho-L-histidine.. Member of the two-component regulatory system GraR/GraS involved in resistance against cationic antimicrobial peptides (CAMPs). GraS probably functions as a sensor protein kinase which is autophosphorylated at a histidine residue and transfers its phosphate group to GraR. The protein is Sensor histidine kinase GraS (graS) of Staphylococcus haemolyticus (strain JCSC1435).